The primary structure comprises 294 residues: Cytidine deaminase (294 aa).

CMP/dCMP-type deaminase domains are found at residues 48-168 (DEDA…FGPK) and 186-294 (LTGD…VLLG). 89 to 91 (NME) lines the substrate pocket. A Zn(2+)-binding site is contributed by His-102. The Proton donor role is filled by Glu-104. 2 residues coordinate Zn(2+): Cys-129 and Cys-132.

Belongs to the cytidine and deoxycytidylate deaminase family. As to quaternary structure, homodimer. The cofactor is Zn(2+).

It carries out the reaction cytidine + H2O + H(+) = uridine + NH4(+). The catalysed reaction is 2'-deoxycytidine + H2O + H(+) = 2'-deoxyuridine + NH4(+). In terms of biological role, this enzyme scavenges exogenous and endogenous cytidine and 2'-deoxycytidine for UMP synthesis. In Salmonella arizonae (strain ATCC BAA-731 / CDC346-86 / RSK2980), this protein is Cytidine deaminase.